Consider the following 113-residue polypeptide: Type III endosome membrane protein TEMP (113 aa).

The segment at 1–22 is disordered; sequence MNETNKTLVGPSELPTASAVAP. At 1–29 the chain is on the extracellular side; it reads MNETNKTLVGPSELPTASAVAPGPGTGAR. An N-linked (GlcNAc...) asparagine glycan is attached at asparagine 5. The chain crosses the membrane as a helical; Signal-anchor for type III membrane protein span at residues 30-50; it reads AWPVLVGFVLGAVVLSLLIAL. Residues 51-113 lie on the Cytoplasmic side of the membrane; that stretch reads AAKCHLCRRY…TEGSRDHFSL (63 aa). Residues 66 to 113 form a disordered region; the sequence is HRPLPETGRGGRPQVAEDEDDDGFIEDNYIQPGTGELGTEGSRDHFSL. The segment covering 81–90 has biased composition (acidic residues); the sequence is AEDEDDDGFI.

It localises to the membrane. The protein localises to the early endosome. It is found in the recycling endosome. Its subcellular location is the cell membrane. May be involved in membrane trafficking between endosomes and plasma membrane. This is Type III endosome membrane protein TEMP (C1orf210) from Homo sapiens (Human).